We begin with the raw amino-acid sequence, 282 residues long: Bifunctional protein FolD (282 aa).

Residues 166 to 168 and I232 contribute to the NADP(+) site; that span reads GAS.

The protein belongs to the tetrahydrofolate dehydrogenase/cyclohydrolase family. In terms of assembly, homodimer.

It carries out the reaction (6R)-5,10-methylene-5,6,7,8-tetrahydrofolate + NADP(+) = (6R)-5,10-methenyltetrahydrofolate + NADPH. The enzyme catalyses (6R)-5,10-methenyltetrahydrofolate + H2O = (6R)-10-formyltetrahydrofolate + H(+). It functions in the pathway one-carbon metabolism; tetrahydrofolate interconversion. In terms of biological role, catalyzes the oxidation of 5,10-methylenetetrahydrofolate to 5,10-methenyltetrahydrofolate and then the hydrolysis of 5,10-methenyltetrahydrofolate to 10-formyltetrahydrofolate. This is Bifunctional protein FolD from Haemophilus influenzae (strain PittGG).